Reading from the N-terminus, the 133-residue chain is Fluoride-specific ion channel FluC (133 aa).

4 helical membrane passes run 3–23, 41–61, 76–96, and 103–123; these read AVVW…GSGL, WGTL…LIWV, IVGL…CLVF, and LIVG…VFLG. Na(+) is bound by residues Gly81 and Thr84.

The protein belongs to the fluoride channel Fluc/FEX (TC 1.A.43) family.

It localises to the cell inner membrane. It catalyses the reaction fluoride(in) = fluoride(out). Na(+) is not transported, but it plays an essential structural role and its presence is essential for fluoride channel function. Its function is as follows. Fluoride-specific ion channel. Important for reducing fluoride concentration in the cell, thus reducing its toxicity. In Xylella fastidiosa (strain M23), this protein is Fluoride-specific ion channel FluC.